The sequence spans 344 residues: Nuclear distribution protein nudE-like 1-B (344 aa).

Residues 13 to 190 (KEEIVYWREL…LAVRERQTDG (178 aa)) are a coiled coil. 2 disordered regions span residues 186-209 (RQTD…TDSS) and 325-344 (PPGV…PLSV). The span at 333-344 (PPSPPGLLPLSV) shows a compositional bias: pro residues.

Belongs to the nudE family. In terms of processing, phosphorylated in mitosis.

It is found in the cytoplasm. Its subcellular location is the cytoskeleton. The protein resides in the microtubule organizing center. It localises to the centrosome. The protein localises to the spindle. Its function is as follows. Required for organization of the cellular microtubule array and microtubule anchoring at the centrosome. Positively regulates the activity of the minus-end directed microtubule motor protein dynein. May enhance dynein-mediated microtubule sliding by targeting dynein to the microtubule plus end. Positively regulates lysosome peripheral distribution and ruffled border formation in osteoclasts. The protein is Nuclear distribution protein nudE-like 1-B (ndel1-b) of Xenopus laevis (African clawed frog).